The sequence spans 254 residues: Thiazole synthase (254 aa).

Catalysis depends on lysine 96, which acts as the Schiff-base intermediate with DXP. Residues glycine 157, 183–184, and 205–206 contribute to the 1-deoxy-D-xylulose 5-phosphate site; these read AG and NT.

The protein belongs to the ThiG family. In terms of assembly, homotetramer. Forms heterodimers with either ThiH or ThiS.

The protein resides in the cytoplasm. It catalyses the reaction [ThiS sulfur-carrier protein]-C-terminal-Gly-aminoethanethioate + 2-iminoacetate + 1-deoxy-D-xylulose 5-phosphate = [ThiS sulfur-carrier protein]-C-terminal Gly-Gly + 2-[(2R,5Z)-2-carboxy-4-methylthiazol-5(2H)-ylidene]ethyl phosphate + 2 H2O + H(+). It functions in the pathway cofactor biosynthesis; thiamine diphosphate biosynthesis. Functionally, catalyzes the rearrangement of 1-deoxy-D-xylulose 5-phosphate (DXP) to produce the thiazole phosphate moiety of thiamine. Sulfur is provided by the thiocarboxylate moiety of the carrier protein ThiS. In vitro, sulfur can be provided by H(2)S. This chain is Thiazole synthase, found in Clostridium kluyveri (strain ATCC 8527 / DSM 555 / NBRC 12016 / NCIMB 10680 / K1).